Reading from the N-terminus, the 116-residue chain is uncharacterized protein (116 aa).

Residues 1-72 form a CHY-type zinc finger; the sequence is MCKHVLNAQV…SDEYCPNCDN (72 aa). Positions 2, 4, 16, 17, 23, 26, 27, 33, 45, 48, 67, and 70 each coordinate Zn(2+).

Its subcellular location is the cytoplasm. This is an uncharacterized protein from Schizosaccharomyces pombe (strain 972 / ATCC 24843) (Fission yeast).